Here is a 45-residue protein sequence, read N- to C-terminus: Ice-structuring protein SS-8 (45 aa).

Methionine 1 is modified (blocked amino end (Met)). Repeats lie at residues 9–21, 22–33, and 34–45; these read KAARLAAAAALAA, KTAADAAAKAAA, and KAAAIAAAAASA.

The protein belongs to the type-I AFP family.

Functionally, antifreeze proteins lower the blood freezing point. The protein is Ice-structuring protein SS-8 of Myoxocephalus scorpius (Shorthorn sculpin).